The chain runs to 115 residues: Parathyroid hormone (115 aa).

Residues 1–25 (MMSANTVAKVMIIMLAVCLLTQTDG) form the signal peptide. Positions 26-31 (KPVRKR) are excised as a propeptide. Positions 51 to 69 (RMQWLRRKLQDMHNFVSLG) are important for receptor binding.

The protein belongs to the parathyroid hormone family. As to quaternary structure, interacts with PTH1R (via N-terminal extracellular domain). Highly expressed in the parathyroid gland. Also expressed in the placenta, thymus and testis.

It is found in the secreted. Its function is as follows. Parathyroid hormone elevates calcium level by dissolving the salts in bone and preventing their renal excretion. Acts by binding to its receptor, PTH1R, activating G protein-coupled receptor signaling. Stimulates [1-14C]-2-deoxy-D-glucose (2DG) transport and glycogen synthesis in osteoblastic cells. This is Parathyroid hormone from Mus musculus (Mouse).